A 957-amino-acid polypeptide reads, in one-letter code: Collagen alpha-1(XXI) chain (957 aa).

A signal peptide spans 1–22 (MAHYITFLCMVLVLLLQNSVLA). Residues 37-211 (DLVFILDGSY…KIREVMKQKL (175 aa)) form the VWFA domain. The N-linked (GlcNAc...) asparagine glycan is linked to asparagine 62. The Laminin G-like domain occupies 230–412 (GFDILLGLDV…VQKLRIYCDP (183 aa)). 3 Collagen-like domains span residues 448–500 (PGKP…GARG), 501–542 (LPGY…GDKG), and 543–594 (SPGF…SPGA). Disordered regions lie at residues 448 to 786 (PGKP…KPGR) and 825 to 938 (GSPG…ICDP). 2 stretches are compositionally biased toward low complexity: residues 451 to 462 (PGLQGPKGDPGL) and 471 to 481 (QPGQDGKPGYQ). Residues 507–517 (EPGRDGDKGDR) show a composition bias toward basic and acidic residues. Composition is skewed to low complexity over residues 618 to 637 (QKGE…PGMP) and 705 to 729 (EKGI…IQGH). Collagen-like domains lie at 681-733 (SPGE…HGAK), 734-787 (GERG…PGRE), 825-882 (GSPG…GSQG), and 884-934 (GYPG…GPPG). Basic and acidic residues predominate over residues 732 to 742 (AKGERGEKGEP). A compositionally biased stretch (pro residues) spans 829-838 (IPGPPGPIGP). A compositionally biased stretch (low complexity) spans 839–874 (EGPRGLPGLPGRDGVPGLVGVPGRPGVRGLKGLPGR). Over residues 889 to 900 (QGPPGPPGPEGP) the composition is skewed to pro residues.

It belongs to the fibril-associated collagens with interrupted helices (FACIT) family. As to expression, highly expressed in lymph node, jejunum, pancreas, stomach, trachea, testis, uterus and placenta; moderately expressed in brain, colon, lung, prostate, spinal cord, salivary gland and vascular smooth-muscle cells and very weakly expressed in heart, liver, kidney, bone marrow, spleen, thymus, skeletal muscle, adrenal gland and peripheral leukocytes. Expression in heart was higher in the right ventricle and atrium than in the left ventricle and atrium.

It localises to the secreted. Its subcellular location is the extracellular space. The protein localises to the extracellular matrix. It is found in the cytoplasm. The sequence is that of Collagen alpha-1(XXI) chain (COL21A1) from Homo sapiens (Human).